Consider the following 86-residue polypeptide: Candiduxin-1 (86 aa).

The first 21 residues, 1 to 21, serve as a signal peptide directing secretion; that stretch reads MKTLLLTLVVLTIACLDLGYT. 4 disulfide bridges follow: cysteine 24-cysteine 45, cysteine 38-cysteine 62, cysteine 66-cysteine 78, and cysteine 79-cysteine 84.

The protein belongs to the three-finger toxin family. Short-chain subfamily. Orphan group IX sub-subfamily. Expressed by the venom gland.

It is found in the secreted. This chain is Candiduxin-1, found in Bungarus candidus (Malayan krait).